The primary structure comprises 442 residues: Adenylosuccinate synthetase (442 aa).

Residues 25–31 (GDEGKGK), 53–55 (GHT), and K62 each bind GTP. Catalysis depends on D26, which acts as the Proton acceptor. Residues D26 and G53 each contribute to the Mg(2+) site. Residues 26–29 (DEGK) and 51–54 (NAGH) contribute to the IMP site. H54 (proton donor) is an active-site residue. IMP-binding residues include T141, R155, N232, and T247. Residue T307 coordinates GTP. Position 307–313 (307–313 (TTTKRPR)) interacts with substrate. R311 is an IMP binding site. Residues R313, 339–341 (KLD), and 425–427 (GVG) contribute to the GTP site.

The protein belongs to the adenylosuccinate synthetase family. In terms of assembly, homodimer. It depends on Mg(2+) as a cofactor.

The protein resides in the cytoplasm. It carries out the reaction IMP + L-aspartate + GTP = N(6)-(1,2-dicarboxyethyl)-AMP + GDP + phosphate + 2 H(+). The protein operates within purine metabolism; AMP biosynthesis via de novo pathway; AMP from IMP: step 1/2. Functionally, plays an important role in the salvage pathway for purine nucleotide biosynthesis. Catalyzes the first committed step in the biosynthesis of AMP from IMP. The chain is Adenylosuccinate synthetase (Adss) from Plasmodium falciparum (isolate 3D7).